The following is a 627-amino-acid chain: Nuclear receptor subfamily 4 group A member 3 (627 aa).

Residues M1–Q112 form an activation function (AF)-1 domain region. A required for DNA-PK heterotrimer region spans residues M1 to S139. The interaction with NCOA1, NCOA2, NCOA3 and KAT2B stretch occupies residues M1–T292. 2 disordered regions span residues H96–P162 and A268–G289. Residues G97–Q112 show a composition bias toward basic residues. The segment covering P141–P150 has biased composition (pro residues). Positions S269–S288 are enriched in low complexity. The segment at residues E290–T365 is a DNA-binding region (nuclear receptor). 2 NR C4-type zinc fingers span residues C293 to C313 and C329 to C353. Residues T365 to P395 are disordered. The segment covering K378 to S388 has biased composition (low complexity). The interval K380 to F627 is interaction with KAT2B. Residues P395–T624 form the NR LBD domain.

The protein belongs to the nuclear hormone receptor family. NR4 subfamily. As to quaternary structure, interacts with SIX3 (via homeobox); differentially regulates the transcriptional activities of NR4A3. Interacts with NCOA2; potentiates the activity of the NR4A3. Interacts with NCOA1, NCOA3, MED1 and KAT2B. Interacts with EP300 and NCOA2; mediates the recruitment of MED1 in the coactivator complex. Interacts with the constituents of DNA-PK heterotrimer PRKDC, XRCC6 and XRCC5; phosphorylates and prevents NR4A3 ubiquitinylation and degradation. Interacts with NR3C1 (via nuclear receptor DNA-binding domain); the interactions represses transcription activity of NR4A3 on the POMC promoter Nur response element (NurRE). Interacts with TRIM28; the interactions potentiates NR4A3 activity on NurRE promoter. Binds DNA as a monomer and homodimer. Interacts with PARP1; activates PARP1 by improving acetylation of PARP1 and suppressing the interaction between PARP1 and SIRT1. In terms of processing, phosphorylated by PRKDC. In terms of tissue distribution, ubiquitous. Highest levels of expression in brain. Widely expressed throughout the arcuate nucleus region of the hypothalamus, namely in AgRP neurons.

The protein localises to the nucleus. Its function is as follows. Transcriptional activator that binds to regulatory elements in promoter regions in a cell- and response element (target)-specific manner. Induces gene expression by binding as monomers to the NR4A1 response element (NBRE) 5'-AAAAGGTCA-3' site and as homodimers to the Nur response element (NurRE) site in the promoter of their regulated target genes. Plays a role in the regulation of proliferation, survival and differentiation of many different cell types and also in metabolism and inflammation. Mediates proliferation of vascular smooth muscle, myeloid progenitor cell and type B pancreatic cells; promotes mitogen-induced vascular smooth muscle cell proliferation through transactivation of SKP2 promoter by binding a NBRE site. Upon PDGF stimulation, stimulates vascular smooth muscle cell proliferation by regulating CCND1 and CCND2 expression. In islets, induces type B pancreatic cell proliferation through up-regulation of genes that activate cell cycle, as well as genes that cause degradation of the CDKN1A. Negatively regulates myeloid progenitor cell proliferation by repressing RUNX1 in a NBRE site-independent manner. During inner ear, plays a role as a key mediator of the proliferative growth phase of semicircular canal development. Also mediates survival of neuron and smooth muscle cells; mediates CREB-induced neuronal survival, and during hippocampus development, plays a critical role in pyramidal cell survival and axonal guidance. Is required for S phase entry of the cell cycle and survival of smooth muscle cells by inducing CCND1, resulting in RB1 phosphorylation. Binds to NBRE motif in CCND1 promoter, resulting in the activation of the promoter and CCND1 transcription. Also plays a role in inflammation; upon TNF stimulation, mediates monocyte adhesion by inducing the expression of VCAM1 and ICAM1 by binding to the NBRE consensus site. In mast cells activated by Fc-epsilon receptor cross-linking, promotes the synthesis and release of cytokines but impairs events leading to degranulation. Also plays a role in metabolism; by modulating feeding behavior; and by playing a role in energy balance by inhibiting the glucocorticoid-induced orexigenic neuropeptides AGRP expression, at least in part by forming a complex with activated NR3C1 on the AGRP- glucocorticoid response element (GRE), and thus weakening the DNA binding activity of NR3C1. Upon catecholamines stimulation, regulates gene expression that controls oxidative metabolism in skeletal muscle. Plays a role in glucose transport by regulating translocation of the SLC2A4 glucose transporter to the cell surface. Finally, during gastrulation plays a crucial role in the formation of anterior mesoderm by controlling cell migration. Inhibits adipogenesis. Also participates in cardiac hypertrophy by activating PARP1. The polypeptide is Nuclear receptor subfamily 4 group A member 3 (Nr4a3) (Mus musculus (Mouse)).